A 753-amino-acid polypeptide reads, in one-letter code: Catalase-peroxidase (753 aa).

The signal sequence occupies residues 1–39 (MLPRVNKRSNCIAKKTSNRLISAVSLAIASLCISQSALA). Positions 118–241 (WHSTGTYRMS…LAAVQMGLIY (124 aa)) form a cross-link, tryptophyl-tyrosyl-methioninium (Trp-Tyr) (with M-267). His-119 acts as the Proton acceptor in catalysis. Positions 241-267 (YVNPEGPNGNHDPISAAADIRDVFARM) form a cross-link, tryptophyl-tyrosyl-methioninium (Tyr-Met) (with W-118). His-282 provides a ligand contact to heme b.

Belongs to the peroxidase family. Peroxidase/catalase subfamily. Homodimer or homotetramer. It depends on heme b as a cofactor. Post-translationally, formation of the three residue Trp-Tyr-Met cross-link is important for the catalase, but not the peroxidase activity of the enzyme.

The enzyme catalyses H2O2 + AH2 = A + 2 H2O. It carries out the reaction 2 H2O2 = O2 + 2 H2O. In terms of biological role, bifunctional enzyme with both catalase and broad-spectrum peroxidase activity. The polypeptide is Catalase-peroxidase (Pseudoalteromonas atlantica (strain T6c / ATCC BAA-1087)).